Here is a 203-residue protein sequence, read N- to C-terminus: Large ribosomal subunit protein uL22 (203 aa).

A compositionally biased stretch (polar residues) spans 138–167 (PENTQSGALSQQSQAEQPQNDPENGVDSQL). Positions 138–203 (PENTQSGALS…TVLAQEKEVK (66 aa)) are disordered. Positions 168–177 (SAKTNSTTTA) are enriched in low complexity. Residues 183-196 (ADNSTKNDATNTVL) are compositionally biased toward polar residues.

It belongs to the universal ribosomal protein uL22 family. As to quaternary structure, part of the 50S ribosomal subunit.

In terms of biological role, this protein binds specifically to 23S rRNA; its binding is stimulated by other ribosomal proteins, e.g. L4, L17, and L20. It is important during the early stages of 50S assembly. It makes multiple contacts with different domains of the 23S rRNA in the assembled 50S subunit and ribosome. The globular domain of the protein is located near the polypeptide exit tunnel on the outside of the subunit, while an extended beta-hairpin is found that lines the wall of the exit tunnel in the center of the 70S ribosome. The protein is Large ribosomal subunit protein uL22 of Mesomycoplasma hyopneumoniae (strain 7448) (Mycoplasma hyopneumoniae).